The primary structure comprises 364 residues: Programmed cell death protein 2-like (364 aa).

Position 2 is an N-acetylalanine (Ala2). The segment at 125-150 (EGSQDWGSDTEETPPPPASDLGSDSN) is disordered.

Functionally, over-expression suppresses AP1, CREB, NFAT, and NF-kB transcriptional activation, and delays cell cycle progression at S phase. The chain is Programmed cell death protein 2-like (Pdcd2l) from Mus musculus (Mouse).